The primary structure comprises 96 residues: uncharacterized protein (96 aa).

This is an uncharacterized protein from Enterobacteria phage T4 (Bacteriophage T4).